The primary structure comprises 135 residues: Membrane-anchored ubiquitin-fold protein 4 (135 aa).

The disordered stretch occupies residues 1–20 (MAEKEEGKVAAEGGAEAEAD). The Ubiquitin-like domain maps to 23-92 (VEVKFRLFDG…NDKNIAQCRA (70 aa)). Cysteine 132 carries the cysteine methyl ester modification. The S-geranylgeranyl cysteine moiety is linked to residue cysteine 132. Residues 133 to 135 (TIL) constitute a propeptide, removed in mature form.

The protein resides in the cell membrane. Functionally, may serve as docking site to facilitate the association of other proteins to the plasma membrane. The protein is Membrane-anchored ubiquitin-fold protein 4 (MUB4) of Oryza sativa subsp. japonica (Rice).